Reading from the N-terminus, the 75-residue chain is Serine rich endogenous peptide 20 (75 aa).

The signal sequence occupies residues 1-25 (MYKLTLCILTLSFLLLSGLSNTVLA). Positions 52 to 66 (KIGASGSNSGRAPSC) match the SCOOP motif motif. The interval 54 to 75 (GASGSNSGRAPSCNNSCKPNRP) is disordered. Positions 56–58 (SGS) match the SxS motif essential for MIK2 binding motif. Positions 56 to 75 (SGSNSGRAPSCNNSCKPNRP) are enriched in polar residues.

Belongs to the serine rich endogenous peptide (SCOOP) phytocytokine family. As to quaternary structure, interacts with MIK2 (via extracellular leucine-rich repeat domain); this interaction triggers the formation of complex between MIK2 and the BAK1/SERK3 and SERK4 coreceptors, and subsequent BAK1 activation by phosphorylation. Mostly expressed in roots.

Its subcellular location is the cell membrane. The protein localises to the secreted. It localises to the extracellular space. The protein resides in the apoplast. Brassicaceae-specific phytocytokine (plant endogenous peptide released into the apoplast) perceived by MIK2 in a BAK1/SERK3 and SERK4 coreceptors-dependent manner, that modulates various physiological and antimicrobial processes including growth prevention and reactive oxygen species (ROS) response regulation. Inhibits root growth. The sequence is that of Serine rich endogenous peptide 20 from Arabidopsis thaliana (Mouse-ear cress).